We begin with the raw amino-acid sequence, 390 residues long: Endoglucanase gh5-1 (390 aa).

An N-terminal signal peptide occupies residues 1–16 (MKATILASTFAAGALA). Positions 17–52 (QSGAWGQCGGNGWSGATSCISGYACNYVNDWYSQCQ) constitute a CBM1 domain. N-linked (GlcNAc...) asparagine glycosylation is found at asparagine 157 and asparagine 261.

The protein belongs to the glycosyl hydrolase 5 (cellulase A) family. N-glycosylated.

It localises to the secreted. It catalyses the reaction Endohydrolysis of (1-&gt;4)-beta-D-glucosidic linkages in cellulose, lichenin and cereal beta-D-glucans.. Functionally, endoglucanase that plays an important role in biomass degradation. Binds onto plant cell walls to participate in the hydrolysis of cellulose. The chain is Endoglucanase gh5-1 from Neurospora crassa (strain ATCC 24698 / 74-OR23-1A / CBS 708.71 / DSM 1257 / FGSC 987).